Consider the following 92-residue polypeptide: Small ribosomal subunit protein uS19c (92 aa).

It belongs to the universal ribosomal protein uS19 family.

It is found in the plastid. The protein localises to the chloroplast. In terms of biological role, protein S19 forms a complex with S13 that binds strongly to the 16S ribosomal RNA. The chain is Small ribosomal subunit protein uS19c from Nephroselmis olivacea (Green alga).